Reading from the N-terminus, the 364-residue chain is SH3 and cysteine-rich domain-containing protein 3 (364 aa).

Disordered stretches follow at residues 1 to 89 (MTEK…NDKP) and 189 to 244 (NKER…HKQP). Residues 64–78 (YEEEEEEEEEEEEPP) are compositionally biased toward acidic residues. A Phorbol-ester/DAG-type zinc finger spans residues 89–140 (PHKFKDHFFKKPKFCDVCARMIVLNNKFGLRCKNCKTNIHEHCQSYVEMQRC). Basic and acidic residues predominate over residues 212–242 (ESARPEEGKPQDGNPEGDKKAEKKTPDDKHK). SH3 domains are found at residues 247-306 (QQSH…RVRA) and 307-364 (GERV…LEEI).

As to quaternary structure, interacts (via SH3 domains) with the calcium channels CACNA1S and CACNA1C. Component of a calcium channel complex with CACNA1S and CACNB1. Component of a calcium channel complex with CACNA1C and CACNB1.

It is found in the cytoplasm. Its subcellular location is the cell membrane. It localises to the sarcolemma. The protein resides in the T-tubule. In terms of biological role, required for normal excitation-contraction coupling in skeletal muscle and for normal muscle contraction in response to membrane depolarization. Required for normal Ca(2+) release from the sarcplasmic reticulum, which ultimately leads to muscle contraction. Probably functions via its effects on muscle calcium channels. Increases CACNA1S channel activity, in addition to its role in enhancing the expression of CACNA1S at the cell membrane. Has a redundant role in promoting the expression of the calcium channel CACNA1S at the cell membrane. Slows down the inactivation rate of the calcium channel CACNA1C. This chain is SH3 and cysteine-rich domain-containing protein 3 (STAC3), found in Homo sapiens (Human).